Here is a 92-residue protein sequence, read N- to C-terminus: Large ribosomal subunit protein bL25 (92 aa).

It belongs to the bacterial ribosomal protein bL25 family. Part of the 50S ribosomal subunit; part of the 5S rRNA/L5/L18/L25 subcomplex. Contacts the 5S rRNA. Binds to the 5S rRNA independently of L5 and L18.

This is one of the proteins that binds to the 5S RNA in the ribosome where it forms part of the central protuberance. The chain is Large ribosomal subunit protein bL25 from Aliivibrio fischeri (strain ATCC 700601 / ES114) (Vibrio fischeri).